Here is a 265-residue protein sequence, read N- to C-terminus: Proteasome subunit alpha (265 aa).

Residues E236–D265 form a disordered region.

It belongs to the peptidase T1A family. As to quaternary structure, the 20S proteasome core is composed of 14 alpha and 14 beta subunits that assemble into four stacked heptameric rings, resulting in a barrel-shaped structure. The two inner rings, each composed of seven catalytic beta subunits, are sandwiched by two outer rings, each composed of seven alpha subunits. The catalytic chamber with the active sites is on the inside of the barrel. Has a gated structure, the ends of the cylinder being occluded by the N-termini of the alpha-subunits. Is capped by the proteasome-associated ATPase, ARC.

It localises to the cytoplasm. It functions in the pathway protein degradation; proteasomal Pup-dependent pathway. The formation of the proteasomal ATPase ARC-20S proteasome complex, likely via the docking of the C-termini of ARC into the intersubunit pockets in the alpha-rings, may trigger opening of the gate for substrate entry. Interconversion between the open-gate and close-gate conformations leads to a dynamic regulation of the 20S proteasome proteolysis activity. In terms of biological role, component of the proteasome core, a large protease complex with broad specificity involved in protein degradation. This Mycobacterium leprae (strain Br4923) protein is Proteasome subunit alpha.